The sequence spans 241 residues: Ribonuclease HII (241 aa).

Positions 57 to 241 (NFIAGVDEAG…RTYVEKILKG (185 aa)) constitute an RNase H type-2 domain. Residues Asp-63, Glu-64, and Asp-155 each contribute to the a divalent metal cation site.

The protein belongs to the RNase HII family. The cofactor is Mn(2+). It depends on Mg(2+) as a cofactor.

The protein resides in the cytoplasm. It catalyses the reaction Endonucleolytic cleavage to 5'-phosphomonoester.. Its function is as follows. Endonuclease that specifically degrades the RNA of RNA-DNA hybrids. The protein is Ribonuclease HII of Caldanaerobacter subterraneus subsp. tengcongensis (strain DSM 15242 / JCM 11007 / NBRC 100824 / MB4) (Thermoanaerobacter tengcongensis).